Reading from the N-terminus, the 762-residue chain is Cell surface protein (762 aa).

A signal peptide spans 1 to 26; that stretch reads MKNLKKLIAVVSTFALVFSAMAVGFA. SLH domains follow at residues 27-90, 92-155, and 156-204; these read ATTP…EMAK, EKSA…WPYG, and YLAK…KEVL. O-linked (Glc...) tyrosine glycosylation is found at Tyr297, Tyr516, Tyr520, and Tyr632.

In terms of processing, glycosylated; contains 8% carbohydrates, which correspond to about 40 to 50 sugar molecules per monomer. O-linked glycans consist of Glc, GalNAc and GlcNAc.

The protein resides in the secreted. Its subcellular location is the cell wall. It localises to the S-layer. Functionally, the S-layer is a paracrystalline mono-layered assembly of proteins which coat the surface of bacteria. This chain is Cell surface protein, found in Thermoanaerobacter kivui (Acetogenium kivui).